Reading from the N-terminus, the 204-residue chain is MASPDDPEDYQDRAAPAAHRVRAGTMLLANTDLLEPTFRRSVIYVVEHNDGGTLGVVLNRASETAVYNVLPQWAKLAVKPKTMFIGGPVKRDAALCLGTLRVGSDPVGVPGLRHVQGRIVMVDLDADPDELAPILEGVRIFAGYSGWTIGQLEGEIERDDWIVLSALPTDVLVEPKVDLWARILRRQPMPLSLLATHPIDLSRN.

Belongs to the UPF0301 (AlgH) family.

This chain is UPF0301 protein Mflv_0850, found in Mycolicibacterium gilvum (strain PYR-GCK) (Mycobacterium gilvum (strain PYR-GCK)).